A 218-amino-acid polypeptide reads, in one-letter code: Small ribosomal subunit protein uS3 (218 aa).

The KH type-2 domain maps to 38–106 (IRTFLKKKLY…KLVVDIKEVK (69 aa)).

The protein belongs to the universal ribosomal protein uS3 family. In terms of assembly, part of the 30S ribosomal subunit. Forms a tight complex with proteins S10 and S14.

Its function is as follows. Binds the lower part of the 30S subunit head. Binds mRNA in the 70S ribosome, positioning it for translation. The sequence is that of Small ribosomal subunit protein uS3 from Agathobacter rectalis (strain ATCC 33656 / DSM 3377 / JCM 17463 / KCTC 5835 / VPI 0990) (Eubacterium rectale).